The sequence spans 436 residues: UPF0597 protein YhaM (436 aa).

The protein belongs to the UPF0597 family.

The protein is UPF0597 protein YhaM of Escherichia coli (strain SE11).